Here is a 241-residue protein sequence, read N- to C-terminus: 3-deoxy-manno-octulosonate cytidylyltransferase (241 aa).

This sequence belongs to the KdsB family.

It is found in the cytoplasm. The catalysed reaction is 3-deoxy-alpha-D-manno-oct-2-ulosonate + CTP = CMP-3-deoxy-beta-D-manno-octulosonate + diphosphate. The protein operates within nucleotide-sugar biosynthesis; CMP-3-deoxy-D-manno-octulosonate biosynthesis; CMP-3-deoxy-D-manno-octulosonate from 3-deoxy-D-manno-octulosonate and CTP: step 1/1. It participates in bacterial outer membrane biogenesis; lipopolysaccharide biosynthesis. Its function is as follows. Activates KDO (a required 8-carbon sugar) for incorporation into bacterial lipopolysaccharide in Gram-negative bacteria. The sequence is that of 3-deoxy-manno-octulosonate cytidylyltransferase from Rickettsia rickettsii (strain Sheila Smith).